We begin with the raw amino-acid sequence, 739 residues long: Trehalose phosphorylase (739 aa).

Residues 1–26 constitute a propeptide that is removed on maturation; sequence MSTPHHQFESKSSTAIRRRLSSSVSS. The interval 1-28 is disordered; that stretch reads MSTPHHQFESKSSTAIRRRLSSSVSSKQ.

It belongs to the glycosyltransferase group 1 family. Glycosyltransferase 4 subfamily. In terms of assembly, homodimer.

It catalyses the reaction alpha,alpha-trehalose + phosphate = alpha-D-glucose + alpha-D-glucose 1-phosphate. Its function is as follows. Reversibly catalyzes the synthesis and degradation of trehalose from glucose and alpha-D-glucose 1-phosphate. The equilibrium lies in the direction of trehalose synthesis. The protein is Trehalose phosphorylase of Pleurotus pulmonarius (Indian oyster mushroom).